A 206-amino-acid polypeptide reads, in one-letter code: MLKTIRKHGITLALFAAGSTGLTAVINQMTKSTIHEQALQQQHALFDQVLPPDRYNNNLQESCYLVDAPALGKGTHRVFIARKDDKPVAAIIEATAPDGYSGAIQLIVGADFNGTVLGTRVTEHHETPGLGDKIERRLSDWITHFSGKTISGENDTHWAVKKDGGDFDQFTGATITPRAVVNAVKRAGLYAESLPAQLPHLTACGE.

Residues 9-29 (GITLALFAAGSTGLTAVINQM) form a helical membrane-spanning segment. An FMN phosphoryl threonine modification is found at Thr-174.

It belongs to the RnfG family. The complex is composed of six subunits: RsxA, RsxB, RsxC, RsxD, RsxE and RsxG. The cofactor is FMN.

It is found in the cell inner membrane. Functionally, part of a membrane-bound complex that couples electron transfer with translocation of ions across the membrane. Required to maintain the reduced state of SoxR. The polypeptide is Ion-translocating oxidoreductase complex subunit G (Salmonella typhimurium (strain LT2 / SGSC1412 / ATCC 700720)).